The chain runs to 65 residues: Small ribosomal subunit protein eS31 (65 aa).

The Zn(2+) site is built by Cys-36, Cys-39, Cys-55, and Cys-58. The segment at 36 to 58 (CPKCGSVMAFHREPVPRWHCGKC) adopts a C4-type zinc-finger fold.

It belongs to the eukaryotic ribosomal protein eS31 family. In terms of assembly, part of the 30S ribosomal subunit. Requires Zn(2+) as cofactor.

The chain is Small ribosomal subunit protein eS31 from Pyrobaculum calidifontis (strain DSM 21063 / JCM 11548 / VA1).